The chain runs to 207 residues: Large ribosomal subunit protein uL4 (207 aa).

The segment at 48–89 is disordered; it reads SHKVKNRSEVRGGGRKPWRQKGTGRARQGSIRSPQWRGGGVV. Basic residues predominate over residues 60–71; sequence GGRKPWRQKGTG.

The protein belongs to the universal ribosomal protein uL4 family. In terms of assembly, part of the 50S ribosomal subunit.

Functionally, one of the primary rRNA binding proteins, this protein initially binds near the 5'-end of the 23S rRNA. It is important during the early stages of 50S assembly. It makes multiple contacts with different domains of the 23S rRNA in the assembled 50S subunit and ribosome. Its function is as follows. Forms part of the polypeptide exit tunnel. This chain is Large ribosomal subunit protein uL4, found in Bacillus velezensis (strain DSM 23117 / BGSC 10A6 / LMG 26770 / FZB42) (Bacillus amyloliquefaciens subsp. plantarum).